Here is a 435-residue protein sequence, read N- to C-terminus: NADH-quinone oxidoreductase subunit D (435 aa).

It belongs to the complex I 49 kDa subunit family. In terms of assembly, NDH-1 is composed of 14 different subunits. Subunits NuoB, C, D, E, F, and G constitute the peripheral sector of the complex.

Its subcellular location is the cell inner membrane. The catalysed reaction is a quinone + NADH + 5 H(+)(in) = a quinol + NAD(+) + 4 H(+)(out). In terms of biological role, NDH-1 shuttles electrons from NADH, via FMN and iron-sulfur (Fe-S) centers, to quinones in the respiratory chain. The immediate electron acceptor for the enzyme in this species is believed to be ubiquinone. Couples the redox reaction to proton translocation (for every two electrons transferred, four hydrogen ions are translocated across the cytoplasmic membrane), and thus conserves the redox energy in a proton gradient. This chain is NADH-quinone oxidoreductase subunit D, found in Xylella fastidiosa (strain M12).